A 509-amino-acid chain; its full sequence is Glutamyl-tRNA(Gln) amidotransferase subunit B, mitochondrial (509 aa).

The protein belongs to the GatB/GatE family. GatB subfamily. Subunit of the heterotrimeric GatFAB amidotransferase (AdT) complex, composed of A, B and F subunits.

The protein resides in the mitochondrion. The catalysed reaction is L-glutamyl-tRNA(Gln) + L-glutamine + ATP + H2O = L-glutaminyl-tRNA(Gln) + L-glutamate + ADP + phosphate + H(+). Functionally, allows the formation of correctly charged Gln-tRNA(Gln) through the transamidation of misacylated Glu-tRNA(Gln) in the mitochondria. The reaction takes place in the presence of glutamine and ATP through an activated gamma-phospho-Glu-tRNA(Gln). The protein is Glutamyl-tRNA(Gln) amidotransferase subunit B, mitochondrial of Candida dubliniensis (strain CD36 / ATCC MYA-646 / CBS 7987 / NCPF 3949 / NRRL Y-17841) (Yeast).